The following is an 88-amino-acid chain: Putative membrane protein insertion efficiency factor (88 aa).

The interval 68–88 is disordered; it reads VPPKKDKNADSEHSCKVHHHH. Over residues 69–82 the composition is skewed to basic and acidic residues; the sequence is PPKKDKNADSEHSC.

This sequence belongs to the UPF0161 family.

It is found in the cell membrane. Its function is as follows. Could be involved in insertion of integral membrane proteins into the membrane. In Listeria monocytogenes serovar 1/2a (strain ATCC BAA-679 / EGD-e), this protein is Putative membrane protein insertion efficiency factor.